The chain runs to 101 residues: Integration host factor subunit beta (101 aa).

The segment at Ala58–Ala101 is disordered. Residues Thr82 to Arg92 show a composition bias toward basic and acidic residues.

The protein belongs to the bacterial histone-like protein family. As to quaternary structure, heterodimer of an alpha and a beta chain.

In terms of biological role, this protein is one of the two subunits of integration host factor, a specific DNA-binding protein that functions in genetic recombination as well as in transcriptional and translational control. The sequence is that of Integration host factor subunit beta from Rhodopseudomonas palustris (strain BisB18).